The chain runs to 131 residues: Mesogenin-1 (131 aa).

Positions 22–79 (EDRSFGDSASSPESESFDSACSSPDARSSPTAGCEHAEQQKPKVKMSMRRRMKASERE) are disordered. Residues 27–45 (GDSASSPESESFDSACSSP) show a composition bias toward low complexity. Residues 63 to 73 (PKVKMSMRRRM) show a composition bias toward basic residues. The bHLH domain maps to 70–124 (RRRMKASEREKLRMRSLAEALHQLRDYLPPGYSRRGQPLTKIQTLKYTIQYIKEL).

In terms of tissue distribution, coexpression of ntl and spt is required for expression.

It is found in the nucleus. Functionally, involved in specifying the paraxial, but not dorsal, mesoderm. May regulate the expression of T-box transcription factors required for mesoderm formation and differentiation. The chain is Mesogenin-1 (msgn1) from Danio rerio (Zebrafish).